Consider the following 370-residue polypeptide: Apolipoprotein A-V (370 aa).

The first 21 residues, 1 to 21 (MASMIALLTWALALLPALASA), serve as a signal peptide directing secretion. At S59 the chain carries Phosphoserine.

This sequence belongs to the apolipoprotein A1/A4/E family. Interacts with GPIHBP1. Interacts with SORL1; this interaction leads to APOA5 internalization and sorting either to lysosomes and degradation, or to the trans-Golgi network.

It is found in the secreted. The protein localises to the early endosome. Its subcellular location is the late endosome. The protein resides in the golgi apparatus. It localises to the trans-Golgi network. Functionally, minor apolipoprotein mainly associated with HDL and to a lesser extent with VLDL. May also be associated with chylomicrons. Important determinant of plasma triglyceride (TG) levels by both being a potent stimulator of apo-CII lipoprotein lipase (LPL) TG hydrolysis and an inhibitor of the hepatic VLDL-TG production rate (without affecting the VLDL-apoB production rate). Activates poorly lecithin:cholesterol acyltransferase (LCAT) and does not enhance efflux of cholesterol from macrophages. Binds heparin. In Acinonyx jubatus (Cheetah), this protein is Apolipoprotein A-V (APOA5).